The sequence spans 962 residues: Nonsense-mediated mRNA decay factor SMG8 (962 aa).

Residues 634 to 661 are disordered; sequence RSPEISSQIASSGLSSRSNSTSSGTSSA. Residues 639–661 show a composition bias toward low complexity; that stretch reads SSQIASSGLSSRSNSTSSGTSSA.

Belongs to the SMG8 family.

Functionally, involved in nonsense-mediated decay (NMD) of mRNAs containing premature stop codons. Probable component of kinase complex containing nonC and recruited to stalled ribosomes. This Drosophila virilis (Fruit fly) protein is Nonsense-mediated mRNA decay factor SMG8.